A 184-amino-acid polypeptide reads, in one-letter code: ATP synthase subunit b, chloroplastic (184 aa).

A helical transmembrane segment spans residues 27–49; sequence LATNPINLSVVLGVLIFFGKGVL.

This sequence belongs to the ATPase B chain family. F-type ATPases have 2 components, F(1) - the catalytic core - and F(0) - the membrane proton channel. F(1) has five subunits: alpha(3), beta(3), gamma(1), delta(1), epsilon(1). F(0) has four main subunits: a(1), b(1), b'(1) and c(10-14). The alpha and beta chains form an alternating ring which encloses part of the gamma chain. F(1) is attached to F(0) by a central stalk formed by the gamma and epsilon chains, while a peripheral stalk is formed by the delta, b and b' chains.

It is found in the plastid. The protein resides in the chloroplast thylakoid membrane. Functionally, f(1)F(0) ATP synthase produces ATP from ADP in the presence of a proton or sodium gradient. F-type ATPases consist of two structural domains, F(1) containing the extramembraneous catalytic core and F(0) containing the membrane proton channel, linked together by a central stalk and a peripheral stalk. During catalysis, ATP synthesis in the catalytic domain of F(1) is coupled via a rotary mechanism of the central stalk subunits to proton translocation. Its function is as follows. Component of the F(0) channel, it forms part of the peripheral stalk, linking F(1) to F(0). The chain is ATP synthase subunit b, chloroplastic from Platanus occidentalis (Sycamore).